A 72-amino-acid chain; its full sequence is DNA-directed RNA polymerase subunit omega (72 aa).

Belongs to the RNA polymerase subunit omega family. In terms of assembly, the RNAP catalytic core consists of 2 alpha, 1 beta, 1 beta' and 1 omega subunit. When a sigma factor is associated with the core the holoenzyme is formed, which can initiate transcription.

The catalysed reaction is RNA(n) + a ribonucleoside 5'-triphosphate = RNA(n+1) + diphosphate. Promotes RNA polymerase assembly. Latches the N- and C-terminal regions of the beta' subunit thereby facilitating its interaction with the beta and alpha subunits. This chain is DNA-directed RNA polymerase subunit omega, found in Campylobacter lari (strain RM2100 / D67 / ATCC BAA-1060).